We begin with the raw amino-acid sequence, 95 residues long: Aspartyl/glutamyl-tRNA(Asn/Gln) amidotransferase subunit C (95 aa).

The segment covering 55 to 67 has biased composition (basic and acidic residues); sequence ALERRNVTREDQV. The tract at residues 55 to 83 is disordered; it reads ALERRNVTREDQVHNSLTNDKALENAPET.

This sequence belongs to the GatC family. Heterotrimer of A, B and C subunits.

The catalysed reaction is L-glutamyl-tRNA(Gln) + L-glutamine + ATP + H2O = L-glutaminyl-tRNA(Gln) + L-glutamate + ADP + phosphate + H(+). It catalyses the reaction L-aspartyl-tRNA(Asn) + L-glutamine + ATP + H2O = L-asparaginyl-tRNA(Asn) + L-glutamate + ADP + phosphate + 2 H(+). Functionally, allows the formation of correctly charged Asn-tRNA(Asn) or Gln-tRNA(Gln) through the transamidation of misacylated Asp-tRNA(Asn) or Glu-tRNA(Gln) in organisms which lack either or both of asparaginyl-tRNA or glutaminyl-tRNA synthetases. The reaction takes place in the presence of glutamine and ATP through an activated phospho-Asp-tRNA(Asn) or phospho-Glu-tRNA(Gln). The polypeptide is Aspartyl/glutamyl-tRNA(Asn/Gln) amidotransferase subunit C (Natranaerobius thermophilus (strain ATCC BAA-1301 / DSM 18059 / JW/NM-WN-LF)).